Reading from the N-terminus, the 30-residue chain is Trypsin inhibitor 1 (30 aa).

Intrachain disulfides connect cysteine 4/cysteine 21, cysteine 11/cysteine 23, and cysteine 17/cysteine 29.

Belongs to the protease inhibitor I7 (squash-type serine protease inhibitor) family.

Its subcellular location is the secreted. Functionally, inhibits trypsin. The chain is Trypsin inhibitor 1 from Momordica charantia (Bitter gourd).